We begin with the raw amino-acid sequence, 130 residues long: Protein ApaG (130 aa).

One can recognise an ApaG domain in the interval 3–127 (SAVTRGIEVT…FSLDVPEQRR (125 aa)).

The chain is Protein ApaG from Brucella abortus (strain S19).